The primary structure comprises 360 residues: Variable large protein 14 (360 aa).

A signal peptide spans 1-18 (MRKRISAIIMTLFMVLAS). The N-palmitoyl cysteine moiety is linked to residue Cys19. The S-diacylglycerol cysteine moiety is linked to residue Cys19.

This sequence belongs to the variable large protein (Vlp) family. Beta subfamily.

The protein resides in the cell outer membrane. Its function is as follows. The Vlp and Vsp proteins are antigenically distinct proteins, only one vlp or vsp gene is transcriptionally active at any one time. Switching between these genes is a mechanism of host immune response evasion. The protein is Variable large protein 14 of Borrelia hermsii.